A 225-amino-acid polypeptide reads, in one-letter code: Urease accessory protein UreF (225 aa).

This sequence belongs to the UreF family. As to quaternary structure, ureD, UreF and UreG form a complex that acts as a GTP-hydrolysis-dependent molecular chaperone, activating the urease apoprotein by helping to assemble the nickel containing metallocenter of UreC. The UreE protein probably delivers the nickel.

Its subcellular location is the cytoplasm. Functionally, required for maturation of urease via the functional incorporation of the urease nickel metallocenter. The protein is Urease accessory protein UreF of Picosynechococcus sp. (strain ATCC 27264 / PCC 7002 / PR-6) (Agmenellum quadruplicatum).